The primary structure comprises 53 residues: Antilisterial bacteriocin subtilosin biosynthesis protein AlbB (53 aa).

2 helical membrane passes run 8–28 (ILLY…FVKS) and 30–50 (YLFT…ARKA).

It is found in the cell membrane. Its function is as follows. Involved in the production of the bacteriocin subtilosin. Required for maximal production and for optimal immunity to subtilosin. This is Antilisterial bacteriocin subtilosin biosynthesis protein AlbB (albB) from Bacillus subtilis (strain 168).